The chain runs to 102 residues: Monothiol glutaredoxin-S1 (102 aa).

The 101-residue stretch at 1-101 (MEKISNLLED…SLLRRAGAIW (101 aa)) folds into the Glutaredoxin domain. C21 contributes to the [2Fe-2S] cluster binding site.

This sequence belongs to the glutaredoxin family. CC-type subfamily.

It localises to the cytoplasm. In terms of biological role, may only reduce GSH-thiol disulfides, but not protein disulfides. This chain is Monothiol glutaredoxin-S1 (GRXS1), found in Arabidopsis thaliana (Mouse-ear cress).